Here is a 375-residue protein sequence, read N- to C-terminus: E3 ubiquitin-protein ligase IE2 (375 aa).

The span at 1–12 shows a compositional bias: polar residues; sequence MSRINNADTPTN. Disordered stretches follow at residues 1–61 and 115–142; these read MSRI…VGDR and LTTT…DYNS. The segment at 177 to 225 adopts an RING-type zinc-finger fold; that stretch reads CHICSCTFTDIKNYNSNFVTSSECNHAVCFKCYVSIVFNKEAYKCSICN. Positions 272-348 form a coiled coil; the sequence is KTIIEELQLE…TFLQNQLDAQ (77 aa).

This sequence belongs to the alphabaculovirus IE2 protein family. In terms of assembly, homooligomer. Auto-ubiquitinated.

The protein resides in the host nucleus. It catalyses the reaction S-ubiquitinyl-[E2 ubiquitin-conjugating enzyme]-L-cysteine + [acceptor protein]-L-lysine = [E2 ubiquitin-conjugating enzyme]-L-cysteine + N(6)-ubiquitinyl-[acceptor protein]-L-lysine.. Functionally, RING-finger E3 ubiquitin ligase that plays an important regulatory role during the initial stages of infection. Migrates to specific nuclear foci early in infection supposely to prepare the sites for viral replication by targeting and ubiquitinating host proteins. This is E3 ubiquitin-protein ligase IE2 (IE2) from Hyphantria cunea nuclear polyhedrosis virus (HcNPV).